The following is a 213-amino-acid chain: Maleylacetoacetate isomerase (213 aa).

A GST N-terminal domain is found at 3–84; it reads NETVLYDYWR…YLAETRDGTG (82 aa). Positions 89–213 constitute a GST C-terminal domain; sequence HPIDRQRVRA…QRAHPDRAKP (125 aa).

Belongs to the GST superfamily. Zeta family.

The catalysed reaction is 4-maleylacetoacetate = 4-fumarylacetoacetate. It functions in the pathway amino-acid degradation; L-phenylalanine degradation; acetoacetate and fumarate from L-phenylalanine: step 5/6. In Rhizobium meliloti (strain 1021) (Ensifer meliloti), this protein is Maleylacetoacetate isomerase (maiA).